Reading from the N-terminus, the 504-residue chain is Maturase K (504 aa).

This sequence belongs to the intron maturase 2 family. MatK subfamily.

It localises to the plastid. The protein resides in the chloroplast. Usually encoded in the trnK tRNA gene intron. Probably assists in splicing its own and other chloroplast group II introns. The chain is Maturase K from Berzelia lanuginosa (Buttonbush).